Here is a 165-residue protein sequence, read N- to C-terminus: Cysteine and tyrosine-rich protein 1 (165 aa).

A signal peptide spans 1 to 29 (MDALRLPRRLGVLLWKVVLLFVYAEDCRA). The Extracellular segment spans residues 30–61 (QCGKDCRAYCCNGSTPHCCSYYAYIGSILSGT). Residues 62–82 (AIAGIVFGIVFIMGVIAGIAI) form a helical membrane-spanning segment. Topologically, residues 83-165 (CICMCMKNNR…SSSQNRICNN (83 aa)) are cytoplasmic. The tract at residues 127–165 (DLPPPYSPAPQASAQRSPPPPYPGNSRKYSSSQNRICNN) is disordered. The span at 153 to 165 (RKYSSSQNRICNN) shows a compositional bias: polar residues.

It belongs to the CYYR1 family.

The protein resides in the membrane. The protein is Cysteine and tyrosine-rich protein 1 (Cyyr1) of Rattus norvegicus (Rat).